The primary structure comprises 522 residues: Peptide chain release factor 3 (522 aa).

The region spanning 10 to 277 (ASRKTFAIIS…TFVDFAPSPS (268 aa)) is the tr-type G domain. GTP is bound by residues 19–26 (SHPDAGKT), 87–91 (DTPGH), and 141–144 (NKMD).

The protein belongs to the TRAFAC class translation factor GTPase superfamily. Classic translation factor GTPase family. PrfC subfamily.

The protein localises to the cytoplasm. Its function is as follows. Increases the formation of ribosomal termination complexes and stimulates activities of RF-1 and RF-2. It binds guanine nucleotides and has strong preference for UGA stop codons. It may interact directly with the ribosome. The stimulation of RF-1 and RF-2 is significantly reduced by GTP and GDP, but not by GMP. This chain is Peptide chain release factor 3, found in Listeria monocytogenes serotype 4b (strain CLIP80459).